The following is a 210-amino-acid chain: MTSKCTLPDLPYDYDALEPIISKQIMELHHKKHHQTYVNNLNAALASQASALDSNDITQLISIQQKLKFNGGGHINHSLFWKNLARYDSPATNLERSAPSLKDAIEKQWGSVKNFTDAFEAVLLGIQGSGWGWLVSSGKTGFLEIVTTKDQDPVTGPIPVFGVDMWEHAYYLQYLNNKASYVQNIWKVINWEEAEHRYLNGTEELGSLKL.

Mn(2+) is bound by residues His29, His77, Asp164, and His168.

Belongs to the iron/manganese superoxide dismutase family. As to quaternary structure, homotetramer. It depends on Mn(2+) as a cofactor.

It localises to the mitochondrion matrix. The catalysed reaction is 2 superoxide + 2 H(+) = H2O2 + O2. In terms of biological role, destroys superoxide anion radicals which are normally produced within the cells and which are toxic to biological systems. In Aspergillus niger, this protein is Superoxide dismutase [Mn], mitochondrial (sodB).